A 130-amino-acid polypeptide reads, in one-letter code: Small ribosomal subunit protein uS9 (130 aa).

Positions 106–130 (RDSRKVERKKPGLKKARKASQFSKR) are disordered. The segment covering 111–130 (VERKKPGLKKARKASQFSKR) has biased composition (basic residues).

This sequence belongs to the universal ribosomal protein uS9 family.

The protein is Small ribosomal subunit protein uS9 of Streptococcus pneumoniae serotype 2 (strain D39 / NCTC 7466).